The following is a 398-amino-acid chain: Cell cycle checkpoint control protein RAD9B (398 aa).

Polar residues predominate over residues R272–L281. Residues R272–P359 are disordered. The segment covering S324–S336 has biased composition (low complexity). Phosphoserine is present on residues S349 and S358.

It belongs to the rad9 family. Interacts with HUS1, HUS1B, RAD1, RAD9A and RAD17.

This chain is Cell cycle checkpoint control protein RAD9B (Rad9b), found in Rattus norvegicus (Rat).